A 114-amino-acid polypeptide reads, in one-letter code: Chaperone protein YscY (114 aa).

In terms of assembly, binds to YscX.

It localises to the cytoplasm. In terms of biological role, required for Yop secretion. Functions probably as a chaperone which stabilizes YscX within the cell, before its secretion. This Yersinia enterocolitica serotype O:8 / biotype 1B (strain NCTC 13174 / 8081) protein is Chaperone protein YscY (yscY).